A 62-amino-acid chain; its full sequence is uncharacterized protein (62 aa).

This is an uncharacterized protein from Bacillus subtilis (strain 168).